Reading from the N-terminus, the 449-residue chain is MNPNRKIITIGSICMVIGIVSLMLQIGNIISIWVSHSIQTENHHQAEPISNTNFLTEKAVASVTLAGNSSLCPISGWAIHSKDNGIRIGSKGDVFVIREPFISCSHLECRTFFLTQGALLNDKHSNGTAKDRSPHRTLMSCPVGEAPSPYNSRFESVAWSASACHDGTSWLTIAISGPDNGAVAVLKYNGIITDTIKSWRNNILRTQESECACVNGSCFTVMTDGPSNGQASYKIFKMEKGKVVKSVELDAPNYHYEECSCYPDAGEVTCVCRDNWHGSNRPWVSFNQNLEYQIGYICSGVFGDNPRPNDGTGSCGPMSLNGAYGVKGFSFKYGNGVWIGRTKSTNSRSGFEMIWDPNGWTGTDSNFSVKQDIVAITDWSGYSGSFVQHPELTGLDCIRPCFWVELIRGRPKESTIWTSGSSISFCGVNSDTVGWSWPDGAELPFTIDK.

Topologically, residues 1–6 (MNPNRK) are intravirion. The helical transmembrane segment at 7–27 (IITIGSICMVIGIVSLMLQIG) threads the bilayer. The involved in apical transport and lipid raft association stretch occupies residues 11–33 (GSICMVIGIVSLMLQIGNIISIW). Residues 28 to 449 (NIISIWVSHS…GAELPFTIDK (422 aa)) lie on the Virion surface side of the membrane. A hypervariable stalk region region spans residues 36 to 70 (HSIQTENHHQAEPISNTNFLTEKAVASVTLAGNSS). N68 is a glycosylation site (N-linked (GlcNAc...) asparagine; by host). Positions 71–449 (LCPISGWAIH…GAELPFTIDK (379 aa)) are head of neuraminidase. 8 disulfides stabilise this stretch: C72/C397, C104/C109, C164/C211, C213/C218, C259/C272, C261/C270, C298/C315, and C401/C426. Residue R98 participates in substrate binding. N-linked (GlcNAc...) asparagine; by host glycosylation is present at N126. The active-site Proton donor/acceptor is D131. R132 is a binding site for substrate. N-linked (GlcNAc...) asparagine; by host glycosylation occurs at N215. 257–258 (EE) serves as a coordination point for substrate. Residue R273 coordinates substrate. Ca(2+) contacts are provided by D274, G278, and D304. Position 348 (R348) interacts with substrate. An N-linked (GlcNAc...) asparagine; by host glycan is attached at N366. Y382 serves as the catalytic Nucleophile.

This sequence belongs to the glycosyl hydrolase 34 family. Homotetramer. It depends on Ca(2+) as a cofactor. In terms of processing, N-glycosylated.

The protein localises to the virion membrane. Its subcellular location is the host apical cell membrane. It carries out the reaction Hydrolysis of alpha-(2-&gt;3)-, alpha-(2-&gt;6)-, alpha-(2-&gt;8)- glycosidic linkages of terminal sialic acid residues in oligosaccharides, glycoproteins, glycolipids, colominic acid and synthetic substrates.. With respect to regulation, inhibited by the neuraminidase inhibitors zanamivir (Relenza) and oseltamivir (Tamiflu). These drugs interfere with the release of progeny virus from infected cells and are effective against all influenza strains. Resistance to neuraminidase inhibitors is quite rare. Its function is as follows. Catalyzes the removal of terminal sialic acid residues from viral and cellular glycoconjugates. Cleaves off the terminal sialic acids on the glycosylated HA during virus budding to facilitate virus release. Additionally helps virus spread through the circulation by further removing sialic acids from the cell surface. These cleavages prevent self-aggregation and ensure the efficient spread of the progeny virus from cell to cell. Otherwise, infection would be limited to one round of replication. Described as a receptor-destroying enzyme because it cleaves a terminal sialic acid from the cellular receptors. May facilitate viral invasion of the upper airways by cleaving the sialic acid moieties on the mucin of the airway epithelial cells. Likely to plays a role in the budding process through its association with lipid rafts during intracellular transport. May additionally display a raft-association independent effect on budding. Plays a role in the determination of host range restriction on replication and virulence. Sialidase activity in late endosome/lysosome traffic seems to enhance virus replication. This is Neuraminidase from Influenza A virus (strain A/Chicken/Hong Kong/37.4/2002 H5N1 genotype X2).